The sequence spans 468 residues: MRAPGERWRPAGAALWLLLLLLLLGATESVRRAQPLRRYTPDWPSLDSRPLPSWFDEAKFGVFIHWGVFSVPAWGSEWFWWNWQGEGRPQYQRFMRDNYPPGSSYADFGPQFTARFFHPEEWADLFQAAGAKYVVLTTKHHEGFTNWPSPVSWNWNSKDVGPHRDLVGELGTALRKRNIRYGLYHSLLEWFHPLYLLDKKNGFKTQYFVGAKTMPELYDLVNSYKPDLIWSDGEWECPDTYWNSTNFLSWLYNDSPVKDEVVVNDRWGQNCSCHHGGYYNCEDKFKPQSLPDHKWEMCTSIDKFSWGYRRDMAMSDVTEESEIISELVQTVSLGGNYLLNIGPTKDGLIVPIFQERLLALGKWLSINGEAIYASKPWRVQWEKNTTSVWYTSKGSAVYAIFLHWPENGVLNLESPITTSTTKIMMLRIQGDLKWSTDPDKGLLISLPQLPPSAVPAEFAWTIKLTGVK.

The signal sequence occupies residues 1–29; it reads MRAPGERWRPAGAALWLLLLLLLLGATES. At threonine 172 the chain carries Phosphothreonine. N-linked (GlcNAc...) asparagine glycans are attached at residues asparagine 243, asparagine 270, and asparagine 384.

Belongs to the glycosyl hydrolase 29 family. In terms of assembly, homotetramer.

The protein localises to the lysosome. It carries out the reaction an alpha-L-fucoside + H2O = L-fucose + an alcohol. It catalyses the reaction a neolactoside IV(2)-alpha-Fuc-nLc4Cer(d18:1(4E)) + H2O = a neolactoside nLc4Cer(d18:1(4E)) + L-fucose. The catalysed reaction is a neolactoside IV(2)-alpha-Fuc-nLc4Cer(d18:0) + H2O = a neolactoside nLc4Cer(d18:0) + L-fucose. Its function is as follows. Alpha-L-fucosidase is responsible for hydrolyzing the alpha-1,6-linked fucose joined to the reducing-end N-acetylglucosamine of the carbohydrate moieties of glycoproteins. The polypeptide is Tissue alpha-L-fucosidase (FUCA1) (Macaca fascicularis (Crab-eating macaque)).